The following is a 629-amino-acid chain: Polyadenylate-binding protein, cytoplasmic and nuclear (629 aa).

The interval 1–47 is disordered; it reads MTLENKAEASPATKEETTTEAAPAEGEAKTESSEEKGSKEDQGDNAS. The span at 26–42 shows a compositional bias: basic and acidic residues; sequence GEAKTESSEEKGSKEDQ. 4 RRM domains span residues 46–124, 134–211, 227–304, and 330–407; these read ASLY…WSQR, GNIY…PHVP, TNVF…RAKK, and VNLY…LAQR. A disordered region spans residues 465-543; that stretch reads GANPQMMMRP…RRKDGESRVA (79 aa). Composition is skewed to low complexity over residues 493 to 506 and 514 to 531; these read MYGA…QGGF and GGQP…QFRG. The PABC domain occupies 542–624; the sequence is VADSISNALE…AITAYNEYLN (83 aa).

This sequence belongs to the polyadenylate-binding protein type-1 family.

It is found in the cytoplasm. The protein localises to the nucleus. In terms of biological role, binds the poly(A) tail of mRNA. Appears to be an important mediator of the multiple roles of the poly(A) tail in mRNA biogenesis, stability and translation. In the nucleus, involved in both mRNA cleavage and polyadenylation. Is also required for efficient mRNA export to the cytoplasm. Acts in concert with a poly(A)-specific nuclease (PAN) to affect poly(A) tail shortening, which may occur concomitantly with either nucleocytoplasmic mRNA transport or translational initiation. In the cytoplasm, stimulates translation initiation and regulates mRNA decay through translation termination-coupled poly(A) shortening, probably mediated by PAN. This chain is Polyadenylate-binding protein, cytoplasmic and nuclear (PAB1), found in Yarrowia lipolytica (strain CLIB 122 / E 150) (Yeast).